Consider the following 797-residue polypeptide: MEDDGKSSPKLPIPGKRNILITSALPYVNNVPHLGNIIGCVLSADVYARYCRLRGYNAIYICGTDEYGTATETKALEENCTPKEICDKYHAIHKEVYDWFGISFDKFGRTSTPEQTEVCQAIFNKLWDNKWLSENTMQQLYCDTCKKFLADRLVEGSCPFEGCNYDSARGDQCEKCGKLLNPTELKDPKCKVCQNTPRIRDTDHLFIELPLLKDRLEAYIKKTSVTGSWSQNAIQTTNAWLRDGLRQRCITRDLKWGVPVPHEKYKDKVFYVWFDAPIGYVSITSCYTSEWEKWWKNPENVELYQFMGKDNVPFHTVMFPSTQLGTEENWTLMKTISVTEYLNYEDGKFSKSKGVGVFGNDVKDTNIPVEVWRYYLLTNRPEVSDTSFSWTDLQAKLNGELLSNLGNFVNRVLSFIAKPDNAGYGSVIPDAHDAESHSLTKSLAEKVEKFVAEYVEAMEKVKLKQGLKTAMLISSEGNYYLQASQFWKLYKEDKPLCAVVIRTAAGLVHLLAQLLEPFMPSFSCEVFKQLNLPPQFSLSDERGEVLLASRPWDILPPSHRIGTPQPLFKELENDEVARYREKFAGSQSDRRARDEAANLADQLNKTKLSDAKKQKASSKGGGKPKPQPAADREITMARLDIRVGKIVKAEKHPKADALYVEEIDVGGGEIRTVVSGLVKYIPLEEMQNRMVCVLCNLKPAKMRDIVSQAMVLAASSSDGSKVELVEPPKTANIGERVTFPGFEGEPDDVLNPKKKVWETLLVDLNTKENLVACYKDVPFTTSAGVCKVSSISNGTIR.

The 'HIGH' region motif lies at 26–36 (PYVNNVPHLGN). The 'KMSKS' region motif lies at 348 to 352 (KFSKS). ATP is bound at residue Lys351. A disordered region spans residues 601–634 (DQLNKTKLSDAKKQKASSKGGGKPKPQPAADREI). One can recognise a tRNA-binding domain in the interval 635-738 (TMARLDIRVG…KTANIGERVT (104 aa)).

It belongs to the class-I aminoacyl-tRNA synthetase family.

Its subcellular location is the cytoplasm. It localises to the cytosol. It carries out the reaction tRNA(Met) + L-methionine + ATP = L-methionyl-tRNA(Met) + AMP + diphosphate. This Arabidopsis thaliana (Mouse-ear cress) protein is Methionine--tRNA ligase, cytoplasmic.